The chain runs to 754 residues: Putative sulfate transporter YPR003C (754 aa).

The interval 1-91 (MTSNNSLLGR…NTSNTNNNDS (91 aa)) is disordered. The Cytoplasmic segment spans residues 1-118 (MTSNNSLLGR…SWLPEYTFNK (118 aa)). Basic and acidic residues predominate over residues 25–45 (RSVDQRDTFSDNFDYDKDSSN). Residues 65-89 (NSRSGCTNNTNNTNNTSNTSNTNNN) are compositionally biased toward low complexity. A helical transmembrane segment spans residues 119–139 (LWGDVIAGISVASFQIPLALS). The Lumenal portion of the chain corresponds to 140 to 146 (YTTSIAH). A helical transmembrane segment spans residues 147–167 (VPPLCGLYSLAISPFVYGILG). Topologically, residues 168–172 (SVPQM) are cytoplasmic. Residues 173 to 193 (IVGPESAISLVVGQAVESITL) form a helical membrane-spanning segment. The Lumenal portion of the chain corresponds to 194-199 (HKENVS). The helical transmembrane segment at 200–220 (LIDISTVITFVSGTILLFSGI) threads the bilayer. At 221–232 (SRFGFLGNVLSK) the chain is on the cytoplasmic side. A helical transmembrane segment spans residues 233-253 (ALLRGFISSVGLVMIINSLIS). The Lumenal portion of the chain corresponds to 254-282 (ELKLDKFLVSLPQHYHTPFEKILFLIDYA). The helical transmembrane segment at 283–303 (PAQYHIPTAIFSGCCLIVLFL) threads the bilayer. The Cytoplasmic segment spans residues 304–317 (TRLLKRKLMKYHKS). A helical transmembrane segment spans residues 318 to 338 (AIFFPDILLVVIVTILISMKF). Topologically, residues 339–370 (NLKHRYGISIIGDFSMDNFDELKNPLTRPRRK) are lumenal. Residues 371–391 (LIPDLFSASLIVAMLGFFEST) form a helical membrane-spanning segment. At 392–410 (TASKSLGTTYNLTVSSNRE) the chain is on the cytoplasmic side. A helical transmembrane segment spans residues 411–431 (LVALGFMNIVISLFGALPAFG). Topologically, residues 432 to 450 (GYGRSKINALSGAQSVMSG) are lumenal. The helical transmembrane segment at 451 to 471 (VFMGVITLITMNLLLQFVHYI) threads the bilayer. Topologically, residues 472-474 (PNC) are cytoplasmic. Residues 475–495 (VLSVITTIIGISLLEEVPGDI) traverse the membrane as a helical segment. The Lumenal portion of the chain corresponds to 496-517 (KFHLRCGGFSELFVFAVTFCTT). A helical membrane pass occupies residues 518 to 538 (IFYSIEAGICIGCVYSIINII). Topologically, residues 539 to 754 (KHSAKSRIQI…SNTLFNSSLV (216 aa)) are cytoplasmic. An STAS domain is found at 574–725 (DVEGTEEIEG…DSIDAALYEI (152 aa)).

This sequence belongs to the SLC26A/SulP transporter (TC 2.A.53) family.

The protein localises to the endoplasmic reticulum membrane. Its function is as follows. Possible sulfate transporter. The polypeptide is Putative sulfate transporter YPR003C (Saccharomyces cerevisiae (strain ATCC 204508 / S288c) (Baker's yeast)).